The primary structure comprises 454 residues: Protein IQ-DOMAIN 1 (454 aa).

The segment at G103 to L113 is calmodulin-binding. The 30-residue stretch at E107–L136 folds into the IQ domain. The segment at W272–P454 is disordered. The span at N280–R328 shows a compositional bias: polar residues. Basic and acidic residues predominate over residues K343 to R356. Positions L371 to S388 are enriched in polar residues. The segment covering T397–S412 has biased composition (low complexity). The Nuclear localization signal motif lies at K421–A428. Residues K442 to P454 show a composition bias toward basic and acidic residues.

The protein belongs to the IQD family. Binds to multiple calmodulin (CaM) in the presence of Ca(2+)(e.g. CaM1 and CaM2) and CaM-like (e.g. CML8 and CML9) proteins. Interacts with KLCR1. Expressed in roots, flowers, stems, siliques, inflorescence stems and whole shoots. Restricted to the vascular bundles.

It localises to the nucleus. Its subcellular location is the nucleolus. The protein resides in the cytoplasm. The protein localises to the cytoskeleton. May be involved in cooperative interactions with calmodulins or calmodulin-like proteins. Modulates expression of glucosinolate pathway genes. May associate with nucleic acids and regulate gene expression at the transcriptional or post-transcriptional level. Recruits KLCR1 and calmodulin proteins to microtubules, thus being a potential scaffold in cellular signaling and trafficking. This chain is Protein IQ-DOMAIN 1, found in Arabidopsis thaliana (Mouse-ear cress).